A 192-amino-acid polypeptide reads, in one-letter code: NADH dehydrogenase [ubiquinone] iron-sulfur protein 3 (192 aa).

The protein belongs to the complex I 30 kDa subunit family. In terms of assembly, complex I is composed of about 45 different subunits. This is a component of the iron-sulfur (IP) fragment of the enzyme.

Its subcellular location is the mitochondrion inner membrane. It carries out the reaction a ubiquinone + NADH + 5 H(+)(in) = a ubiquinol + NAD(+) + 4 H(+)(out). Its function is as follows. Core subunit of the mitochondrial membrane respiratory chain NADH dehydrogenase (Complex I) that is believed to belong to the minimal assembly required for catalysis. Complex I functions in the transfer of electrons from NADH to the respiratory chain. The immediate electron acceptor for the enzyme is believed to be ubiquinone. This chain is NADH dehydrogenase [ubiquinone] iron-sulfur protein 3 (NAD9), found in Beta trigyna (Caucasian wild beet).